The following is a 172-amino-acid chain: Putative phosphoesterase BT9727_1129 (172 aa).

H34 acts as the Proton donor in catalysis. Short sequence motifs (HXTX) lie at residues 34–37 (HITL) and 115–118 (HLTI). H115 functions as the Proton acceptor in the catalytic mechanism.

Belongs to the 2H phosphoesterase superfamily. YjcG family.

The sequence is that of Putative phosphoesterase BT9727_1129 from Bacillus thuringiensis subsp. konkukian (strain 97-27).